The primary structure comprises 239 residues: DNA repair protein RecO (239 aa).

Belongs to the RecO family.

Functionally, involved in DNA repair and RecF pathway recombination. The polypeptide is DNA repair protein RecO (Aromatoleum aromaticum (strain DSM 19018 / LMG 30748 / EbN1) (Azoarcus sp. (strain EbN1))).